The sequence spans 291 residues: Trimeric intracellular cation channel type B (291 aa).

The Lumenal portion of the chain corresponds to 1–16 (MEYPWDDLTLAFSRTS). The helical transmembrane segment at 17-33 (MFPFFDIAHYLVSVMAL) threads the bilayer. Residues 34–47 (KQRPGAVAAAWSNP) lie on the Cytoplasmic side of the membrane. A helical membrane pass occupies residues 48-69 (LSSWLSAMLHCFGGGILSCILL). Residues 70-80 (AEPPLKFLTNH) lie on the Lumenal side of the membrane. A helical membrane pass occupies residues 81-99 (TNILLASSIWYIVFFCPRD). Topologically, residues 100–103 (LVSQ) are cytoplasmic. The helical transmembrane segment at 104–122 (GYSYQPIQLLAAGMKEVTR) threads the bilayer. A 1,2-diacyl-sn-glycero-3-phospho-(1D-myo-inositol-4,5-bisphosphate)-binding residues include lysine 118 and arginine 122. Residues 123-138 (TWKIVGGVAHANGYYR) lie on the Lumenal side of the membrane. Residues 139-156 (NGWIVMIAVGWARGAGGA) traverse the membrane as a helical segment. Residues 157–179 (IITACEQLLKGDWKPEGDEWLKM) are Cytoplasmic-facing. A helical membrane pass occupies residues 180–197 (SFPCKVTLLGSIMFTFQH). Residues 198–206 (TRHLAISKH) lie on the Lumenal side of the membrane. A helical membrane pass occupies residues 207–225 (DLMFLYTIFLVTIKVTMMM). Residues 226-291 (TKDAAVTLTP…SAKRHAKKED (66 aa)) are Cytoplasmic-facing. A disordered region spans residues 254–291 (LSEKKAEVKPSSNGSASSASKRGTEPPSSAKRHAKKED). A compositionally biased stretch (low complexity) spans 264–273 (SSNGSASSAS).

It belongs to the TMEM38 family. As to quaternary structure, homotrimer; conformation seems to be controled by binding to diacylglycerol (DAG).

It is found in the endoplasmic reticulum membrane. It catalyses the reaction K(+)(in) = K(+)(out). With respect to regulation, channel activity is activated by increased cytosolic Ca(2+) levels and blocked by luminal high Ca(2+) levels. Functionally, intracellular monovalent cation channel required for maintenance of rapid intracellular calcium release. Acts as a potassium counter-ion channel that functions in synchronization with calcium release from intracellular stores. Activated by increased cytosolic Ca(2+) levels. The polypeptide is Trimeric intracellular cation channel type B (Tmem38b) (Rattus norvegicus (Rat)).